The chain runs to 338 residues: Heat-inducible transcription repressor HrcA (338 aa).

Belongs to the HrcA family.

Its function is as follows. Negative regulator of class I heat shock genes (grpE-dnaK-dnaJ and groELS operons). Prevents heat-shock induction of these operons. This chain is Heat-inducible transcription repressor HrcA, found in Thermotoga sp. (strain RQ2).